A 496-amino-acid chain; its full sequence is Glycerol kinase (496 aa).

Residue threonine 12 coordinates ADP. Residues threonine 12, threonine 13, and serine 14 each coordinate ATP. Sn-glycerol 3-phosphate is bound at residue threonine 12. An ADP-binding site is contributed by arginine 16. The sn-glycerol 3-phosphate site is built by arginine 82, glutamate 83, and tyrosine 134. Positions 82, 83, and 134 each coordinate glycerol. Histidine 230 carries the phosphohistidine; by HPr modification. Residue aspartate 244 participates in sn-glycerol 3-phosphate binding. Glycerol is bound by residues aspartate 244 and glutamine 245. ADP contacts are provided by threonine 266 and glycine 309. ATP is bound by residues threonine 266, glycine 309, glutamine 313, and glycine 410. The ADP site is built by glycine 410 and asparagine 414.

This sequence belongs to the FGGY kinase family. As to quaternary structure, homotetramer and homodimer (in equilibrium). In terms of processing, the phosphoenolpyruvate-dependent sugar phosphotransferase system (PTS), including enzyme I, and histidine-containing protein (HPr) are required for the phosphorylation, which leads to the activation of the enzyme.

The enzyme catalyses glycerol + ATP = sn-glycerol 3-phosphate + ADP + H(+). The protein operates within polyol metabolism; glycerol degradation via glycerol kinase pathway; sn-glycerol 3-phosphate from glycerol: step 1/1. Activated by phosphorylation and inhibited by fructose 1,6-bisphosphate (FBP). Key enzyme in the regulation of glycerol uptake and metabolism. Catalyzes the phosphorylation of glycerol to yield sn-glycerol 3-phosphate. The polypeptide is Glycerol kinase (Bacillus mycoides (strain KBAB4) (Bacillus weihenstephanensis)).